The following is a 1057-amino-acid chain: Atrial natriuretic peptide receptor 1 (1057 aa).

The first 28 residues, 1–28, serve as a signal peptide directing secretion; the sequence is MPGSRRVRPRLRALLLLPPLLLLRSGHA. Residues 29–469 lie on the Extracellular side of the membrane; the sequence is SDLTVAVVLP…CNQDHFSTLE (441 aa). Asn-41 carries an N-linked (GlcNAc...) asparagine glycan. Chloride-binding residues include Ser-81, Gly-113, and Cys-114. Intrachain disulfides connect Cys-88–Cys-114 and Cys-192–Cys-241. 5 N-linked (GlcNAc...) asparagine glycosylation sites follow: Asn-208, Asn-334, Asn-375, Asn-382, and Asn-423. The cysteines at positions 451 and 460 are disulfide-linked. The chain crosses the membrane as a helical span at residues 470 to 490; sequence VLALVGSLSLVSFLIVSFFIY. Over 491–1057 the chain is Cytoplasmic; the sequence is RKMQLEKELV…LGERGCSTRG (567 aa). Ser-515 and Ser-525 each carry phosphoserine. A Protein kinase domain is found at 524–801; that stretch reads GSRLTLSGRG…QIRLALRKFN (278 aa). Thr-528 carries the phosphothreonine modification. 3 positions are modified to phosphoserine: Ser-530, Ser-534, and Ser-538. Position 541 is a phosphothreonine (Thr-541). Residues 872–1002 form the Guanylate cyclase domain; it reads TIYFSDIVGF…DTVNTASRME (131 aa).

This sequence belongs to the adenylyl cyclase class-4/guanylyl cyclase family. As to quaternary structure, homodimer. Phosphorylation of the protein kinase-like domain is required for full activation by ANP.

It localises to the membrane. The enzyme catalyses GTP = 3',5'-cyclic GMP + diphosphate. Functionally, receptor for the atrial natriuretic peptide NPPA/ANP and the brain natriuretic peptide NPPB/BNP which are potent vasoactive hormones playing a key role in cardiovascular homeostasis. Plays an essential role in the regulation of endothelial cell senescence and vascular aging. Upon activation by ANP or BNP, stimulates the production of cyclic guanosine monophosphate (cGMP) that promotes vascular tone and volume homeostasis by activation of protein kinase cGMP-dependent 1/PRKG1 and subsequently PRKAA1, thereby controlling blood pressure and maintaining cardiovascular homeostasis. The chain is Atrial natriuretic peptide receptor 1 (Npr1) from Mus musculus (Mouse).